Reading from the N-terminus, the 201-residue chain is Urease accessory protein UreG (201 aa).

G11–T18 is a binding site for GTP.

This sequence belongs to the SIMIBI class G3E GTPase family. UreG subfamily. Homodimer. UreD, UreF and UreG form a complex that acts as a GTP-hydrolysis-dependent molecular chaperone, activating the urease apoprotein by helping to assemble the nickel containing metallocenter of UreC. The UreE protein probably delivers the nickel.

The protein resides in the cytoplasm. Functionally, facilitates the functional incorporation of the urease nickel metallocenter. This process requires GTP hydrolysis, probably effectuated by UreG. This is Urease accessory protein UreG from Prochlorococcus marinus subsp. pastoris (strain CCMP1986 / NIES-2087 / MED4).